We begin with the raw amino-acid sequence, 154 residues long: Mating pheromone 2 (154 aa).

Positions 1-16 (MKAIFIILAILMVTQA) are cleaved as a signal peptide. A propeptide spanning residues 17-52 (FKMTSKVNTKLQSQIQSKFQSKNKLASTFQTSSQLK) is cleaved from the precursor.

Its subcellular location is the secreted. Its function is as follows. Mating ciliate pheromones (or gamones) are diffusible extracellular communication signals that distinguish different intraspecific classes of cells commonly referred to as 'mating types'. They prepare the latter for conjugation by changing their cell surface properties. In Euplotoides octocarinatus (Freshwater ciliate), this protein is Mating pheromone 2.